The chain runs to 98 residues: Cystatin-B (98 aa).

Residue methionine 1 is modified to N-acetylmethionine. The Secondary area of contact signature appears at 46-50; it reads QLVAG.

It belongs to the cystatin family. Able to form dimers stabilized by noncovalent forces.

It localises to the cytoplasm. Its function is as follows. This is an intracellular thiol proteinase inhibitor. The sequence is that of Cystatin-B (CSTB) from Ovis aries (Sheep).